The primary structure comprises 343 residues: tRNA-splicing endonuclease (343 aa).

Active-site residues include Y277, H288, and K319.

The protein belongs to the tRNA-intron endonuclease family. Archaeal long subfamily. Homodimer.

The enzyme catalyses pretRNA = a 3'-half-tRNA molecule with a 5'-OH end + a 5'-half-tRNA molecule with a 2',3'-cyclic phosphate end + an intron with a 2',3'-cyclic phosphate and a 5'-hydroxyl terminus.. Its function is as follows. Endonuclease that removes tRNA introns. Cleaves pre-tRNA at the 5' and 3' splice sites to release the intron. The products are an intron and two tRNA half-molecules bearing 2',3' cyclic phosphate and 5'-OH termini. Recognizes a pseudosymmetric substrate in which 2 bulged loops of 3 bases are separated by a stem of 4 bp. The polypeptide is tRNA-splicing endonuclease (Halobacterium salinarum (strain ATCC 29341 / DSM 671 / R1)).